We begin with the raw amino-acid sequence, 212 residues long: Pyridoxine/pyridoxamine 5'-phosphate oxidase (212 aa).

Residues 8–11 and K66 each bind substrate; that span reads RREY. FMN contacts are provided by residues 61-66, 76-77, R82, K83, and Q105; these read RIVLLK and FT. 3 residues coordinate substrate: Y123, R127, and S131. FMN is bound by residues 140-141 and W185; that span reads QS. 191–193 provides a ligand contact to substrate; that stretch reads RLH. R195 contributes to the FMN binding site.

Belongs to the pyridoxamine 5'-phosphate oxidase family. In terms of assembly, homodimer. The cofactor is FMN.

The enzyme catalyses pyridoxamine 5'-phosphate + O2 + H2O = pyridoxal 5'-phosphate + H2O2 + NH4(+). The catalysed reaction is pyridoxine 5'-phosphate + O2 = pyridoxal 5'-phosphate + H2O2. The protein operates within cofactor metabolism; pyridoxal 5'-phosphate salvage; pyridoxal 5'-phosphate from pyridoxamine 5'-phosphate: step 1/1. It participates in cofactor metabolism; pyridoxal 5'-phosphate salvage; pyridoxal 5'-phosphate from pyridoxine 5'-phosphate: step 1/1. Its function is as follows. Catalyzes the oxidation of either pyridoxine 5'-phosphate (PNP) or pyridoxamine 5'-phosphate (PMP) into pyridoxal 5'-phosphate (PLP). The protein is Pyridoxine/pyridoxamine 5'-phosphate oxidase of Shewanella amazonensis (strain ATCC BAA-1098 / SB2B).